Consider the following 691-residue polypeptide: Elongation factor G (691 aa).

One can recognise a tr-type G domain in the interval 8–283; sequence EDYRNFGIMA…AVVDYLPSPA (276 aa). GTP is bound by residues 17 to 24, 81 to 85, and 135 to 138; these read AHIDAGKT, DTPGH, and NKMD.

This sequence belongs to the TRAFAC class translation factor GTPase superfamily. Classic translation factor GTPase family. EF-G/EF-2 subfamily.

The protein resides in the cytoplasm. Functionally, catalyzes the GTP-dependent ribosomal translocation step during translation elongation. During this step, the ribosome changes from the pre-translocational (PRE) to the post-translocational (POST) state as the newly formed A-site-bound peptidyl-tRNA and P-site-bound deacylated tRNA move to the P and E sites, respectively. Catalyzes the coordinated movement of the two tRNA molecules, the mRNA and conformational changes in the ribosome. The chain is Elongation factor G from Methylobacterium radiotolerans (strain ATCC 27329 / DSM 1819 / JCM 2831 / NBRC 15690 / NCIMB 10815 / 0-1).